Reading from the N-terminus, the 141-residue chain is Endoribonuclease YbeY (141 aa).

The Zn(2+) site is built by His-101, His-105, and His-111.

The protein belongs to the endoribonuclease YbeY family. It depends on Zn(2+) as a cofactor.

The protein localises to the cytoplasm. In terms of biological role, single strand-specific metallo-endoribonuclease involved in late-stage 70S ribosome quality control and in maturation of the 3' terminus of the 16S rRNA. This is Endoribonuclease YbeY from Nitrosomonas eutropha (strain DSM 101675 / C91 / Nm57).